The sequence spans 943 residues: Glycine dehydrogenase (decarboxylating) (943 aa).

The residue at position 695 (Lys695) is an N6-(pyridoxal phosphate)lysine.

It belongs to the GcvP family. The glycine cleavage system is composed of four proteins: P, T, L and H. Requires pyridoxal 5'-phosphate as cofactor.

The catalysed reaction is N(6)-[(R)-lipoyl]-L-lysyl-[glycine-cleavage complex H protein] + glycine + H(+) = N(6)-[(R)-S(8)-aminomethyldihydrolipoyl]-L-lysyl-[glycine-cleavage complex H protein] + CO2. The glycine cleavage system catalyzes the degradation of glycine. The P protein binds the alpha-amino group of glycine through its pyridoxal phosphate cofactor; CO(2) is released and the remaining methylamine moiety is then transferred to the lipoamide cofactor of the H protein. This Jannaschia sp. (strain CCS1) protein is Glycine dehydrogenase (decarboxylating).